A 502-amino-acid polypeptide reads, in one-letter code: Bone morphogenetic protein receptor type-1B (502 aa).

The segment covering 1-10 (MPLLSSSKLS) has biased composition (polar residues). The signal sequence occupies residues 1–13 (MPLLSSSKLSMES). A disordered region spans residues 1-27 (MPLLSSSKLSMESRKEDSEGTAPAPPQ). Topologically, residues 14–126 (RKEDSEGTAP…DFAEGNIHHK (113 aa)) are extracellular. Disulfide bonds link C32-C53, C34-C38, C47-C71, C81-C95, and C96-C102. A glycan (N-linked (GlcNAc...) asparagine) is linked at N44. A helical transmembrane segment spans residues 127 to 148 (ALLISVTVCSILLVLIIIFCYF). Residues 149-502 (RYKRQEARPR…KMSESQDIKL (354 aa)) are Cytoplasmic-facing. The 30-residue stretch at 174 to 203 (ESLKDLIEQSQSSGSGSGLPLLVQRTIAKQ) folds into the GS domain. Positions 204–494 (IQMVKQIGKG…LRVKKTLAKM (291 aa)) constitute a Protein kinase domain. ATP is bound by residues 210–218 (IGKGRYGEV) and K231. D332 serves as the catalytic Proton acceptor.

It belongs to the protein kinase superfamily. TKL Ser/Thr protein kinase family. TGFB receptor subfamily. Mg(2+) is required as a cofactor. Mn(2+) serves as cofactor. Post-translationally, autophosphorylated.

It is found in the cell membrane. It catalyses the reaction L-threonyl-[receptor-protein] + ATP = O-phospho-L-threonyl-[receptor-protein] + ADP + H(+). The catalysed reaction is L-seryl-[receptor-protein] + ATP = O-phospho-L-seryl-[receptor-protein] + ADP + H(+). On ligand binding, forms a receptor complex consisting of two type II and two type I transmembrane serine/threonine kinases. Type II receptors phosphorylate and activate type I receptors which autophosphorylate, then bind and activate SMAD transcription. Positively regulates chondrocyte differentiation. The chain is Bone morphogenetic protein receptor type-1B (BMPR1B) from Gallus gallus (Chicken).